A 216-amino-acid chain; its full sequence is Ribosomal RNA small subunit methyltransferase G (216 aa).

S-adenosyl-L-methionine is bound by residues Gly73, Leu78, Ala124–Glu125, and Arg139.

Belongs to the methyltransferase superfamily. RNA methyltransferase RsmG family.

It is found in the cytoplasm. Specifically methylates the N7 position of guanine in position 518 of 16S rRNA. This Pseudarthrobacter chlorophenolicus (strain ATCC 700700 / DSM 12829 / CIP 107037 / JCM 12360 / KCTC 9906 / NCIMB 13794 / A6) (Arthrobacter chlorophenolicus) protein is Ribosomal RNA small subunit methyltransferase G.